The following is a 442-amino-acid chain: tRNA-2-methylthio-N(6)-dimethylallyladenosine synthase (442 aa).

Residues 5–122 (KKVFIKTLGC…LPEMIKQKQK (118 aa)) form the MTTase N-terminal domain. Residues cysteine 14, cysteine 51, cysteine 85, cysteine 159, cysteine 163, and cysteine 166 each contribute to the [4Fe-4S] cluster site. A Radical SAM core domain is found at 145–378 (KAEGAKAYVS…DLLNSNAQII (234 aa)). In terms of domain architecture, TRAM spans 380–442 (RQMVGTNQRI…LPNSLRGELI (63 aa)).

It belongs to the methylthiotransferase family. MiaB subfamily. Monomer. [4Fe-4S] cluster is required as a cofactor.

The protein localises to the cytoplasm. It catalyses the reaction N(6)-dimethylallyladenosine(37) in tRNA + (sulfur carrier)-SH + AH2 + 2 S-adenosyl-L-methionine = 2-methylsulfanyl-N(6)-dimethylallyladenosine(37) in tRNA + (sulfur carrier)-H + 5'-deoxyadenosine + L-methionine + A + S-adenosyl-L-homocysteine + 2 H(+). In terms of biological role, catalyzes the methylthiolation of N6-(dimethylallyl)adenosine (i(6)A), leading to the formation of 2-methylthio-N6-(dimethylallyl)adenosine (ms(2)i(6)A) at position 37 in tRNAs that read codons beginning with uridine. This Francisella tularensis subsp. holarctica (strain LVS) protein is tRNA-2-methylthio-N(6)-dimethylallyladenosine synthase.